The primary structure comprises 105 residues: Putative toxin MazF8 (105 aa).

Forms a complex with cognate antitoxin MazE8.

In terms of biological role, putative toxic component of a type II toxin-antitoxin (TA) system. Acts as an endoribonuclease. Neutralized by coexpression with cognate antitoxin MazE8. This chain is Putative toxin MazF8 (mazF8), found in Mycobacterium tuberculosis (strain CDC 1551 / Oshkosh).